We begin with the raw amino-acid sequence, 453 residues long: Homogentisate 1,2-dioxygenase (453 aa).

His306 serves as the catalytic Proton acceptor. Positions 349 and 355 each coordinate Fe cation. 2 residues coordinate homogentisate: Tyr364 and His385. Residue His385 coordinates Fe cation.

It belongs to the homogentisate dioxygenase family. In terms of assembly, hexamer; dimer of trimers. The cofactor is Fe cation.

It carries out the reaction homogentisate + O2 = 4-maleylacetoacetate + H(+). It functions in the pathway amino-acid degradation; L-phenylalanine degradation; acetoacetate and fumarate from L-phenylalanine: step 4/6. Functionally, involved in the catabolism of homogentisate (2,5-dihydroxyphenylacetate or 2,5-OH-PhAc), a central intermediate in the degradation of phenylalanine and tyrosine. Catalyzes the oxidative ring cleavage of the aromatic ring of homogentisate to yield maleylacetoacetate. This chain is Homogentisate 1,2-dioxygenase, found in Rhizobium etli (strain CIAT 652).